A 407-amino-acid polypeptide reads, in one-letter code: Zinc finger protein 552 (407 aa).

One can recognise a KRAB domain in the interval 14-90 (VTFEDVAVKF…PMAGVSPKKA (77 aa)). A C2H2-type 1 zinc finger spans residues 91-113 (HPCEMCGPILGDILHVADHQGTH). Residues 119–141 (HRCEAWGNKLYDSGNFHQHQNEH) form a C2H2-type 2; degenerate zinc finger. Residues lysine 176 and lysine 198 each participate in a glycyl lysine isopeptide (Lys-Gly) (interchain with G-Cter in SUMO2) cross-link. The C2H2-type 3; degenerate zinc-finger motif lies at 212–234 (YSCGGCMKHFSTKDILSQHERLL). A C2H2-type 4; degenerate zinc finger spans residues 244-262 (ECGKSSSKYDSFSNHQGVH). Glycyl lysine isopeptide (Lys-Gly) (interchain with G-Cter in SUMO2) cross-links involve residues lysine 251 and lysine 266. C2H2-type zinc fingers lie at residues 268–290 (YTCGICGKLFNSKSHLLVHQRIH), 296–318 (YECEVCQKFFRHKYHLIAHQRVH), 324–346 (YECSDCGKSFTHSSTFRVHKRVH), 352–374 (YECSECGKSFAESSSLTKHRRVH), and 380–402 (YGCSECEKKFRQISSLRHHQRVH). Residue lysine 308 forms a Glycyl lysine isopeptide (Lys-Gly) (interchain with G-Cter in SUMO2) linkage.

The protein belongs to the krueppel C2H2-type zinc-finger protein family.

Its subcellular location is the nucleus. In terms of biological role, may be involved in transcriptional regulation. The protein is Zinc finger protein 552 (ZNF552) of Homo sapiens (Human).